Here is a 301-residue protein sequence, read N- to C-terminus: Protein KTI12 homolog (301 aa).

8 to 15 (GQPCSGKS) serves as a coordination point for ATP. Residues 262 to 275 (LRRTFIKLAGQYSL) form a calmodulin-binding region.

Belongs to the KTI12 family. In terms of assembly, interacts with the elongator complex. Binds to calmodulin in a calcium-dependent manner.

The protein localises to the cytoplasm. It localises to the nucleus. In terms of biological role, elongator complex-associated factor that is not a structural subunit but rather transiently contacts the complex. Regulates both meristem activity and organ growth; acts as a positive regulator of adaxial leaf patterning. Required for an early step in synthesis of 5-carbamoylmethyl (ncm5) groups present on uridines (ncm5U) at the wobble position in tRNA. The polypeptide is Protein KTI12 homolog (Oryza sativa subsp. indica (Rice)).